Here is a 214-residue protein sequence, read N- to C-terminus: Heat shock protein 26 (214 aa).

Residue Ser-2 is modified to N-acetylserine. Thr-42 bears the Phosphothreonine mark. The sHSP domain occupies Gly-86–Ser-207. Ser-90 is modified (phosphoserine). The residue at position 163 (Thr-163) is a Phosphothreonine. Positions Lys-192–Asn-214 are disordered. Residues Pro-193–Glu-205 are compositionally biased toward basic and acidic residues. 2 positions are modified to phosphoserine: Ser-208 and Ser-211.

It belongs to the small heat shock protein (HSP20) family. Present in large complexes.

In terms of biological role, not known. One of the major polypeptides produced on heat shock. In Saccharomyces cerevisiae (strain ATCC 204508 / S288c) (Baker's yeast), this protein is Heat shock protein 26 (HSP26).